We begin with the raw amino-acid sequence, 312 residues long: 2,3-dihydroxyphenylpropionate/2,3-dihydroxicinnamic acid 1,2-dioxygenase 1 (312 aa).

Residue histidine 115 is the Proton donor of the active site. The active-site Proton acceptor is histidine 179.

Belongs to the LigB/MhpB extradiol dioxygenase family. In terms of assembly, homotetramer. The cofactor is Fe(2+).

It catalyses the reaction 3-(2,3-dihydroxyphenyl)propanoate + O2 = (2Z,4E)-2-hydroxy-6-oxonona-2,4-dienedioate + H(+). The enzyme catalyses (2E)-3-(2,3-dihydroxyphenyl)prop-2-enoate + O2 = (2Z,4E,7E)-2-hydroxy-6-oxonona-2,4,7-trienedioate + H(+). The protein operates within aromatic compound metabolism; 3-phenylpropanoate degradation. Catalyzes the non-heme iron(II)-dependent oxidative cleavage of 2,3-dihydroxyphenylpropionic acid and 2,3-dihydroxicinnamic acid into 2-hydroxy-6-ketononadienedioate and 2-hydroxy-6-ketononatrienedioate, respectively. In Dechloromonas aromatica (strain RCB), this protein is 2,3-dihydroxyphenylpropionate/2,3-dihydroxicinnamic acid 1,2-dioxygenase 1.